A 612-amino-acid polypeptide reads, in one-letter code: Sulfite reductase [NADPH] hemoprotein beta-component (612 aa).

A disordered region spans residues 1-26 (MDDHKPIETPDGPAVDTPGIGARRYE). Residues C469, C475, C514, and C518 each coordinate [4Fe-4S] cluster. C518 serves as a coordination point for siroheme.

It belongs to the nitrite and sulfite reductase 4Fe-4S domain family. Alpha(8)-beta(8). The alpha component is a flavoprotein, the beta component is a hemoprotein. It depends on siroheme as a cofactor. Requires [4Fe-4S] cluster as cofactor.

The enzyme catalyses hydrogen sulfide + 3 NADP(+) + 3 H2O = sulfite + 3 NADPH + 4 H(+). It functions in the pathway sulfur metabolism; hydrogen sulfide biosynthesis; hydrogen sulfide from sulfite (NADPH route): step 1/1. Component of the sulfite reductase complex that catalyzes the 6-electron reduction of sulfite to sulfide. This is one of several activities required for the biosynthesis of L-cysteine from sulfate. This chain is Sulfite reductase [NADPH] hemoprotein beta-component, found in Methylorubrum extorquens (strain ATCC 14718 / DSM 1338 / JCM 2805 / NCIMB 9133 / AM1) (Methylobacterium extorquens).